A 372-amino-acid chain; its full sequence is Phospho-N-acetylmuramoyl-pentapeptide-transferase (372 aa).

The next 10 helical transmembrane spans lie at 21–41 (SLTLRALLAVITALAFSMIFG), 71–91 (TPTMGGVLILSAIGVSTLLWA), 98–118 (VWILLIVMIIFGAVGWADDWL), 134–154 (YFWLSMGALFVGISLYYIATL), 176–196 (MIPFSAVPFGIGFIIFTYFVI), 211–231 (GLAILPVVLVAAGLGAMAYVS), 251–271 (VIIVCGAMIGAGLGFLWFNAH), 275–295 (VFMGDVGALSLGAMLGTIAVM), 300–320 (IAFAIMGGLFVAEALSVMLQV), and 349–369 (QVVARFWIIAIILVILGLMTL).

It belongs to the glycosyltransferase 4 family. MraY subfamily. It depends on Mg(2+) as a cofactor.

It localises to the cell inner membrane. It catalyses the reaction UDP-N-acetyl-alpha-D-muramoyl-L-alanyl-gamma-D-glutamyl-meso-2,6-diaminopimeloyl-D-alanyl-D-alanine + di-trans,octa-cis-undecaprenyl phosphate = di-trans,octa-cis-undecaprenyl diphospho-N-acetyl-alpha-D-muramoyl-L-alanyl-D-glutamyl-meso-2,6-diaminopimeloyl-D-alanyl-D-alanine + UMP. Its pathway is cell wall biogenesis; peptidoglycan biosynthesis. In terms of biological role, catalyzes the initial step of the lipid cycle reactions in the biosynthesis of the cell wall peptidoglycan: transfers peptidoglycan precursor phospho-MurNAc-pentapeptide from UDP-MurNAc-pentapeptide onto the lipid carrier undecaprenyl phosphate, yielding undecaprenyl-pyrophosphoryl-MurNAc-pentapeptide, known as lipid I. In Psychrobacter arcticus (strain DSM 17307 / VKM B-2377 / 273-4), this protein is Phospho-N-acetylmuramoyl-pentapeptide-transferase.